Reading from the N-terminus, the 323-residue chain is o-succinylbenzoate synthase (323 aa).

The Proton donor role is filled by Lys-134. Mg(2+) contacts are provided by Asp-162, Glu-191, and Asp-214. The active-site Proton acceptor is Lys-236.

It belongs to the mandelate racemase/muconate lactonizing enzyme family. MenC type 1 subfamily. It depends on a divalent metal cation as a cofactor.

The catalysed reaction is (1R,6R)-6-hydroxy-2-succinyl-cyclohexa-2,4-diene-1-carboxylate = 2-succinylbenzoate + H2O. Its pathway is quinol/quinone metabolism; 1,4-dihydroxy-2-naphthoate biosynthesis; 1,4-dihydroxy-2-naphthoate from chorismate: step 4/7. It functions in the pathway quinol/quinone metabolism; menaquinone biosynthesis. Functionally, converts 2-succinyl-6-hydroxy-2,4-cyclohexadiene-1-carboxylate (SHCHC) to 2-succinylbenzoate (OSB). The polypeptide is o-succinylbenzoate synthase (Yersinia pseudotuberculosis serotype O:3 (strain YPIII)).